Reading from the N-terminus, the 280-residue chain is 4-diphosphocytidyl-2-C-methyl-D-erythritol kinase (280 aa).

K8 is an active-site residue. ATP is bound at residue 91–101; it reads PVAAGLAGGST. D133 is an active-site residue.

This sequence belongs to the GHMP kinase family. IspE subfamily.

The enzyme catalyses 4-CDP-2-C-methyl-D-erythritol + ATP = 4-CDP-2-C-methyl-D-erythritol 2-phosphate + ADP + H(+). It functions in the pathway isoprenoid biosynthesis; isopentenyl diphosphate biosynthesis via DXP pathway; isopentenyl diphosphate from 1-deoxy-D-xylulose 5-phosphate: step 3/6. Catalyzes the phosphorylation of the position 2 hydroxy group of 4-diphosphocytidyl-2C-methyl-D-erythritol. In Clostridium botulinum (strain Okra / Type B1), this protein is 4-diphosphocytidyl-2-C-methyl-D-erythritol kinase.